The chain runs to 379 residues: UDP-4-amino-4-deoxy-L-arabinose--oxoglutarate aminotransferase (379 aa).

Position 183 is an N6-(pyridoxal phosphate)lysine (Lys-183).

The protein belongs to the DegT/DnrJ/EryC1 family. ArnB subfamily. Homodimer. The cofactor is pyridoxal 5'-phosphate.

The enzyme catalyses UDP-4-amino-4-deoxy-beta-L-arabinose + 2-oxoglutarate = UDP-beta-L-threo-pentopyranos-4-ulose + L-glutamate. The protein operates within nucleotide-sugar biosynthesis; UDP-4-deoxy-4-formamido-beta-L-arabinose biosynthesis; UDP-4-deoxy-4-formamido-beta-L-arabinose from UDP-alpha-D-glucuronate: step 2/3. Its pathway is bacterial outer membrane biogenesis; lipopolysaccharide biosynthesis. Its function is as follows. Catalyzes the conversion of UDP-4-keto-arabinose (UDP-Ara4O) to UDP-4-amino-4-deoxy-L-arabinose (UDP-L-Ara4N). The modified arabinose is attached to lipid A and is required for resistance to polymyxin and cationic antimicrobial peptides. The sequence is that of UDP-4-amino-4-deoxy-L-arabinose--oxoglutarate aminotransferase from Pseudomonas fluorescens (strain ATCC BAA-477 / NRRL B-23932 / Pf-5).